A 152-amino-acid chain; its full sequence is Large ribosomal subunit protein uL15 (152 aa).

The segment at 1-55 is disordered; it reads MRLHELKPNEGATHKKKRVGRGIGSGHGKTSTKGQKGQTSRSGDSKLPARFEGGQ. The segment covering 28-42 has biased composition (polar residues); that stretch reads GKTSTKGQKGQTSRS.

This sequence belongs to the universal ribosomal protein uL15 family. As to quaternary structure, part of the 50S ribosomal subunit.

In terms of biological role, binds to the 23S rRNA. The sequence is that of Large ribosomal subunit protein uL15 from Sulfurihydrogenibium sp. (strain YO3AOP1).